A 488-amino-acid chain; its full sequence is Glutamyl-tRNA(Gln) amidotransferase subunit A (488 aa).

Residues K77 and S152 each act as charge relay system in the active site. The active-site Acyl-ester intermediate is the S176.

This sequence belongs to the amidase family. GatA subfamily. Heterotrimer of A, B and C subunits.

The enzyme catalyses L-glutamyl-tRNA(Gln) + L-glutamine + ATP + H2O = L-glutaminyl-tRNA(Gln) + L-glutamate + ADP + phosphate + H(+). Allows the formation of correctly charged Gln-tRNA(Gln) through the transamidation of misacylated Glu-tRNA(Gln) in organisms which lack glutaminyl-tRNA synthetase. The reaction takes place in the presence of glutamine and ATP through an activated gamma-phospho-Glu-tRNA(Gln). This Streptococcus pyogenes serotype M4 (strain MGAS10750) protein is Glutamyl-tRNA(Gln) amidotransferase subunit A.